Reading from the N-terminus, the 690-residue chain is Methionine--tRNA ligase (690 aa).

A 'HIGH' region motif is present at residues P13–H23. Zn(2+) is bound by residues C144, C147, C157, and C160. A 'KMSKS' region motif is present at residues K335 to S339. K338 is an ATP binding site. Residues D584–R690 enclose the tRNA-binding domain.

Belongs to the class-I aminoacyl-tRNA synthetase family. MetG type 1 subfamily. Homodimer. The cofactor is Zn(2+).

The protein resides in the cytoplasm. It catalyses the reaction tRNA(Met) + L-methionine + ATP = L-methionyl-tRNA(Met) + AMP + diphosphate. Functionally, is required not only for elongation of protein synthesis but also for the initiation of all mRNA translation through initiator tRNA(fMet) aminoacylation. The chain is Methionine--tRNA ligase from Cupriavidus metallidurans (strain ATCC 43123 / DSM 2839 / NBRC 102507 / CH34) (Ralstonia metallidurans).